The sequence spans 853 residues: DNA mismatch repair protein MutS (853 aa).

Position 614–621 (614–621 (GPNMGGKS)) interacts with ATP.

This sequence belongs to the DNA mismatch repair MutS family.

Functionally, this protein is involved in the repair of mismatches in DNA. It is possible that it carries out the mismatch recognition step. This protein has a weak ATPase activity. The protein is DNA mismatch repair protein MutS of Shigella boydii serotype 18 (strain CDC 3083-94 / BS512).